We begin with the raw amino-acid sequence, 259 residues long: Protein FAM220A (259 aa).

Positions 29 to 66 (GLKRRSEKRNPSPSDVPSWTDQPVADTHGKSRAMAAAS) are disordered. A compositionally biased stretch (polar residues) spans 39–49 (PSPSDVPSWTD).

Interacts with transcriptional activator STAT3; the interaction occurs in both the nucleus and the cytoplasm, is enhanced by IL6 and promotes STAT3 dephosphorylation, leading to negative regulation of STAT3 transcriptional activator activity. Can interact with both unphosphorylated and phosphorylated STAT3 but interacts preferentially with phosphorylated STAT3 in the nucleus. Interacts with protein phosphatase PTPN2/TC45; this promotes interaction of PTPN2 with STAT3, leading to dephosphorylation of STAT3 by PTPN2.

The protein localises to the nucleus. Its subcellular location is the cytoplasm. It localises to the cytoplasmic vesicle. The protein resides in the secretory vesicle. It is found in the acrosome. Promotes dephosphorylation of transcriptional activator STAT3 by interacting with both STAT3 and protein phosphatase PTPN2. This promotes interaction of PTPN2 with STAT3 and mediates STAT3 dephosphorylation by PTPN2, leading to negative regulation of STAT3 transcriptional activator activity. May be required for spermiogenesis or sperm function. This is Protein FAM220A (Fam220a) from Rattus norvegicus (Rat).